The sequence spans 460 residues: Cysteine--tRNA ligase (460 aa).

A Zn(2+)-binding site is contributed by Cys28. The 'HIGH' region signature appears at 30–40 (MTVYDYCHLGH). Zn(2+) is bound by residues Cys209, His234, and Glu238. Positions 266-270 (KMSKS) match the 'KMSKS' region motif. An ATP-binding site is contributed by Lys269.

This sequence belongs to the class-I aminoacyl-tRNA synthetase family. Monomer. Requires Zn(2+) as cofactor.

It localises to the cytoplasm. It carries out the reaction tRNA(Cys) + L-cysteine + ATP = L-cysteinyl-tRNA(Cys) + AMP + diphosphate. This is Cysteine--tRNA ligase from Pseudomonas putida (strain GB-1).